A 473-amino-acid chain; its full sequence is Photosystem II CP43 reaction center protein (473 aa).

The propeptide occupies 1-14 (MKTLYSLRRFYPVE). Threonine 15 carries the N-acetylthreonine modification. Threonine 15 is subject to Phosphothreonine. 5 consecutive transmembrane segments (helical) span residues 69–93 (LFEVAHFVPEKPMYEQGLILLPHLA), 134–155 (LLGPETLEESFPFFGYVWKDRN), 178–200 (KALYFGGVYDTWAPGGGDVRKIT), 255–275 (KPFAWARRAFVWSGEAYLSYS), and 291–312 (WFNNTAYPSEFYGPTGPEASQA). Position 367 (glutamate 367) interacts with [CaMn4O5] cluster. A helical transmembrane segment spans residues 447-471 (RARAAAAGFEKGIDRDFEPVLSMTP).

This sequence belongs to the PsbB/PsbC family. PsbC subfamily. In terms of assembly, PSII is composed of 1 copy each of membrane proteins PsbA, PsbB, PsbC, PsbD, PsbE, PsbF, PsbH, PsbI, PsbJ, PsbK, PsbL, PsbM, PsbT, PsbX, PsbY, PsbZ, Psb30/Ycf12, at least 3 peripheral proteins of the oxygen-evolving complex and a large number of cofactors. It forms dimeric complexes. It depends on Binds multiple chlorophylls and provides some of the ligands for the Ca-4Mn-5O cluster of the oxygen-evolving complex. It may also provide a ligand for a Cl- that is required for oxygen evolution. PSII binds additional chlorophylls, carotenoids and specific lipids. as a cofactor.

Its subcellular location is the plastid. The protein resides in the chloroplast thylakoid membrane. Functionally, one of the components of the core complex of photosystem II (PSII). It binds chlorophyll and helps catalyze the primary light-induced photochemical processes of PSII. PSII is a light-driven water:plastoquinone oxidoreductase, using light energy to abstract electrons from H(2)O, generating O(2) and a proton gradient subsequently used for ATP formation. This Liriodendron tulipifera (Tuliptree) protein is Photosystem II CP43 reaction center protein.